Here is a 520-residue protein sequence, read N- to C-terminus: Ribonuclease Y (520 aa).

The helical transmembrane segment at 3 to 23 (IEIQWIGIGAAFLVGAIGGAL) threads the bilayer. Residues 210 to 273 (AVSVVPLPND…EVARLALERL (64 aa)) form the KH domain. The region spanning 336–429 (VLQHSIEVAF…VQAADALSGA (94 aa)) is the HD domain.

The protein belongs to the RNase Y family.

The protein resides in the cell membrane. Its function is as follows. Endoribonuclease that initiates mRNA decay. This chain is Ribonuclease Y, found in Syntrophotalea carbinolica (strain DSM 2380 / NBRC 103641 / GraBd1) (Pelobacter carbinolicus).